The chain runs to 357 residues: Arginine kinase (357 aa).

A Phosphagen kinase N-terminal domain is found at 9–91; sequence KLEAGFKKLQ…FDPIIDDYHG (83 aa). 64-68 is a substrate binding site; the sequence is GVGIY. Residues 119-356 form the Phosphagen kinase C-terminal domain; it reads FIISTRVRCG…LEMIKMEKAA (238 aa). Residues 122 to 126 and His185 contribute to the ATP site; that span reads STRVR. A substrate-binding site is contributed by Glu225. Arg229 provides a ligand contact to ATP. Position 271 (Cys271) interacts with substrate. Residues 280–284 and 309–314 each bind ATP; these read RASVH and RGTRGE. Position 314 (Glu314) interacts with substrate.

The protein belongs to the ATP:guanido phosphotransferase family. In terms of assembly, monomer.

It localises to the cytoplasm. It carries out the reaction L-arginine + ATP = N(omega)-phospho-L-arginine + ADP + H(+). Functionally, catalyzes the reversible transfer of the terminal phosphoryl group of ATP to L-arginine. The polypeptide is Arginine kinase (Limulus polyphemus (Atlantic horseshoe crab)).